The following is a 343-amino-acid chain: MRVDDFDYELPPELIAQEPLDRRDATRLMTVDRLKGEVGEVSFREITRLFRPGDLLVVNDTRVIPARFFGVKESGGRVEVFLERRLAAVGERWQCLLRSSKPSRPGTRIVLAEGVSAEVIGRSDGDTWCVSFTPVTGFDEWLERNGAMPLPPYIRRSAADADRERYQTVFSRQRGAVAAPTAGLHFTPELLDELRERGVEIATLTLHVGLGTFMPIRVERVEEHRMHRERYIIPSATADAVNARKGGKGRVIALGTTTCRTLEHAARDDGRVAAGAGETGIFIYPGYHFKTVDALITNFHLPKSTLLMLVSAFAGKELLFRAYHEAVTRRFRFFSYGDAMFVH.

Belongs to the QueA family. In terms of assembly, monomer.

It localises to the cytoplasm. It carries out the reaction 7-aminomethyl-7-carbaguanosine(34) in tRNA + S-adenosyl-L-methionine = epoxyqueuosine(34) in tRNA + adenine + L-methionine + 2 H(+). It functions in the pathway tRNA modification; tRNA-queuosine biosynthesis. Its function is as follows. Transfers and isomerizes the ribose moiety from AdoMet to the 7-aminomethyl group of 7-deazaguanine (preQ1-tRNA) to give epoxyqueuosine (oQ-tRNA). This chain is S-adenosylmethionine:tRNA ribosyltransferase-isomerase, found in Geobacter metallireducens (strain ATCC 53774 / DSM 7210 / GS-15).